The primary structure comprises 118 residues: MKLYKKRGIIYIHSTFNNTISTLTDVFGNTIVWYSAGILGYKGPKKSTSLASQLISEKITISILKNNIKVVDIYIKGLGLGKETTLRIINNSGIFIRSITDITPIPHNGCRKKKKRRV.

Belongs to the universal ribosomal protein uS11 family. In terms of assembly, part of the 30S ribosomal subunit. Interacts with proteins S7 and S18. Binds to IF-3.

In terms of biological role, located on the platform of the 30S subunit, it bridges several disparate RNA helices of the 16S rRNA. Forms part of the Shine-Dalgarno cleft in the 70S ribosome. In Carsonella ruddii (strain PV), this protein is Small ribosomal subunit protein uS11.